The sequence spans 331 residues: NmrA-like family domain-containing oxidoreductase himF (331 aa).

NADP(+) is bound by residues 8-13 (GATGNQ), 34-38 (RNAES), 55-56 (DG), 76-78 (TNG), Lys-133, and 155-167 (WFFE…QMAA).

This sequence belongs to the NmrA-type oxidoreductase family.

It participates in secondary metabolite biosynthesis. Its function is as follows. NmrA-like family domain-containing oxidoreductase; part of the him gene cluster that mediates the biosynthesis of himeic acid A, a ubiquitin-activating enzyme (E1) inhibitor. First, himA, together with the trans-enoyl reductase himH, catalyzes the formation of apolyketide chain, which is then condensed with leucine by the NRPS activity of himA. Dieckmann cyclization and release from himA gives a tetramic acid intermediate as the product of himA PKS-NRPS. HimG then catalyzes alpha-oxidation of the tetramic acid ring, with a subsequent rearrangement to yield apyrone intermediate. Two terminal methyl groups of polyketide and amide side chains are oxidized to carboxylic acids by himC cytochrome P450 monooxygenase to form himeic acid A. Himeic acid A is further converted to himeic acid B and C during culture growth. No gene responsible for pyrone to pyridone conversion was found in the him gene cluster and himeic acid A is non-enzymatically converted to himeic acid C by the incorporation of an ammonium nitrogen atom in a pH5 buffer, and to himeic acid B at a conversion ratio of 50% during incubation in MeOH for 5 days. The chain is NmrA-like family domain-containing oxidoreductase himF from Aspergillus japonicus.